Consider the following 647-residue polypeptide: Protein INVOLVED IN DE NOVO 2 (647 aa).

2 disordered regions span residues 1-20 (MGST…SESE) and 101-123 (SASE…DCDH). A compositionally biased stretch (acidic residues) spans 9-20 (SDDEDSDISESE). A coiled-coil region spans residues 253-508 (IAELTEEEAR…NIMKEWNTNI (256 aa)).

As to quaternary structure, interacts with FMD1/IDNL1. Forms a complex with FMD1/IDNL1 and FMD2/INDL2. Can form homodimers. Interacts with MORC6.

Functionally, forms a complex with FDM1/IDNL1 and FDM2/IDNL2 that is required for RNA-directed DNA methylation (RdDM) and that functions at a downstream step of the RdDM pathway and downstream of small interfering RNA (siRNA) formation. Required for de novo DNA methylation, siRNA accumulation and siRNA-mediated maintenance methylation. Required for several post-transcriptional gene silencing pathways. Binds double-stranded RNAs (dsRNAs) with 5'-overhangs through its XS domain. Binds long non-coding RNA (lncRNA) in an AGO4-dependent manner and associates with DRM2, resulting in DNA methylation of RdDM target loci. Mediates the silencing of a subset of MORC6 target loci. The protein is Protein INVOLVED IN DE NOVO 2 of Arabidopsis thaliana (Mouse-ear cress).